A 142-amino-acid polypeptide reads, in one-letter code: Large ribosomal subunit protein uL11 (142 aa).

This sequence belongs to the universal ribosomal protein uL11 family. Part of the ribosomal stalk of the 50S ribosomal subunit. Interacts with L10 and the large rRNA to form the base of the stalk. L10 forms an elongated spine to which L12 dimers bind in a sequential fashion forming a multimeric L10(L12)X complex. One or more lysine residues are methylated.

Forms part of the ribosomal stalk which helps the ribosome interact with GTP-bound translation factors. The protein is Large ribosomal subunit protein uL11 of Afipia carboxidovorans (strain ATCC 49405 / DSM 1227 / KCTC 32145 / OM5) (Oligotropha carboxidovorans).